The sequence spans 671 residues: DNA ligase (671 aa).

NAD(+)-binding positions include 32-36 (DAEYD), 81-82 (SL), and Glu-113. Residue Lys-115 is the N6-AMP-lysine intermediate of the active site. NAD(+) is bound by residues Arg-136, Glu-173, Lys-290, and Lys-314. Zn(2+) contacts are provided by Cys-408, Cys-411, Cys-426, and Cys-432. The BRCT domain maps to 593-671 (EIDSPFAGKT…EAEMLRLLGS (79 aa)).

This sequence belongs to the NAD-dependent DNA ligase family. LigA subfamily. Mg(2+) is required as a cofactor. It depends on Mn(2+) as a cofactor.

The enzyme catalyses NAD(+) + (deoxyribonucleotide)n-3'-hydroxyl + 5'-phospho-(deoxyribonucleotide)m = (deoxyribonucleotide)n+m + AMP + beta-nicotinamide D-nucleotide.. In terms of biological role, DNA ligase that catalyzes the formation of phosphodiester linkages between 5'-phosphoryl and 3'-hydroxyl groups in double-stranded DNA using NAD as a coenzyme and as the energy source for the reaction. It is essential for DNA replication and repair of damaged DNA. The polypeptide is DNA ligase (Shigella flexneri serotype 5b (strain 8401)).